Reading from the N-terminus, the 719-residue chain is Protein Hook homolog 2 (719 aa).

Positions 1 to 161 are required for localization to the centrosome and induction of aggresome formation; sequence MSVDKAELCG…ELMTKDTPDS (161 aa). Residues 1-548 are sufficient for interaction with microtubules; the sequence is MSVDKAELCG…LKRKLEEHLQ (548 aa). In terms of domain architecture, Calponin-homology (CH) spans 6–122; sequence AELCGSLLTW…KLLQLVLGCA (117 aa). A Phosphoserine modification is found at Ser-163. Coiled-coil stretches lie at residues 180–427 and 455–607; these read LSEE…AQLQ and AELR…VDKA. Position 230 is a phosphothreonine (Thr-230). The required for localization to the centrosome and induction of aggresome formation stretch occupies residues 533-719; the sequence is DAISILLKRK…SLNLRPTDKH (187 aa). The tract at residues 584-719 is sufficient for interaction with CNTRL; it reads HNLQKKDADL…SLNLRPTDKH (136 aa). Residues 696–719 are disordered; that stretch reads LATNSRRGPLGRLASLNLRPTDKH. The residue at position 710 (Ser-710) is a Phosphoserine.

Belongs to the hook family. In terms of assembly, self-associates. Component of the FTS/Hook/FHIP complex (FHF complex), composed of AKTIP/FTS, FHIP1B, and one or more members of the Hook family of proteins HOOK1, HOOK2, and HOOK3. May interact directly with AKTIP/FTS, HOOK1 and HOOK3. Associates with several subunits of the homotypic vesicular sorting complex (the HOPS complex) including VPS16 and VPS41; these interactions may be indirect. Interacts with CNTRL. Interacts with microtubules. Interacts with ZC3H14. Interacts with LRGUK (via guanylate kinase-like domain). Interacts with CCDC181. Interacts with AP4M1; the interaction is direct, mediates the interaction between FTS-Hook-FHIP (FHF) complex and AP-4 and the perinuclear distribution of AP-4.

The protein resides in the cytoplasm. It is found in the cytoskeleton. It localises to the microtubule organizing center. Its subcellular location is the centrosome. The protein localises to the golgi apparatus. The protein resides in the trans-Golgi network. In terms of biological role, component of the FTS/Hook/FHIP complex (FHF complex). The FHF complex may function to promote vesicle trafficking and/or fusion via the homotypic vesicular protein sorting complex (the HOPS complex). Contributes to the establishment and maintenance of centrosome function. May function in the positioning or formation of aggresomes, which are pericentriolar accumulations of misfolded proteins, proteasomes and chaperones. FHF complex promotes the distribution of AP-4 complex to the perinuclear area of the cell. The polypeptide is Protein Hook homolog 2 (HOOK2) (Homo sapiens (Human)).